We begin with the raw amino-acid sequence, 1363 residues long: MLSFVDTRILLLLAVTSYLATSQHLFQASAGRKGPRGDKGPQGERGPPGPPGRDGEDGPPGPPGPPGPPGLGGNFAAQYDPSKAADFGPGPMGLMGPRGPPGASGPPGPPGFQGVPGEPGEPGQTGPQGPRGPPGPPGKAGEDGHPGKPGRPGERGVAGPQGARGFPGTPGLPGFKGIRGHNGLDGQKGQPGTPGTKGEPGAPGENGTPGQPGARGLPGERGRIGAPGPAGARGSDGSAGPTGPAGPIGAAGPPGFPGAPGAKGEIGPAGNVGPTGPAGPRGEIGLPGSSGPVGPPGNPGANGLPGAKGAAGLPGVAGAPGLPGPRGIPGPPGPAGPSGARGLVGEPGPAGAKGESGNKGEPGAAGPPGPPGPSGEEGKRGSNGEPGSAGPPGPAGLRGVPGSRGLPGADGRAGVMGPAGNRGASGPVGAKGPNGDAGRPGEPGLMGPRGLPGQPGSPGPAGKEGPVGFPGADGRVGPIGPAGNRGEPGNIGFPGPKGPTGEPGKPGEKGNVGLAGPRGAPGPEGNNGAQGPPGVTGNQGAKGETGPAGPPGFQGLPGPSGPAGEAGKPGERGLHGEFGVPGPAGPRGERGLPGESGAVGPAGPIGSRGPSGPPGPDGNKGEPGNVGPAGAPGPAGPGGIPGERGVAGVPGGKGEKGAPGLRGDTGATGRDGARGLPGAIGAPGPAGGAGDRGEGGPAGPAGPAGARGIPGERGEPGPVGPSGFAGPPGAAGQPGAKGERGPKGPKGETGPTGAIGPIGASGPPGPVGAAGPAGPRGDAGPPGMTGFPGAAGRVGPPGPAGITGPPGPPGPAGKDGPRGLRGDVGPVGRTGEQGIAGPPGFAGEKGPSGEAGAAGPPGTPGPQGILGAPGILGLPGSRGERGLPGIAGATGEPGPLGVSGPPGARGPSGPVGSPGPNGAPGEAGRDGNPGNDGPPGRDGAPGFKGERGAPGNPGPSGALGAPGPHGQVGPSGKPGNRGDPGPVGPVGPAGAFGPRGLAGPQGPRGEKGEPGDKGHRGLPGLKGHNGLQGLPGLAGQHGDQGPPGNNGPAGPRGPPGPSGPPGKDGRNGLPGPIGPAGVRGSHGSQGPAGPPGPPGPPGPPGPNGGGYEVGFDAEYYRADQPSLRPKDYEVDATLKTLNNQIETLLTPEGSKKNPARTCRDLRLSHPEWSSGFYWIDPNQGCTADAIRAYCDFATGETCIHASLEDIPTKTWYVSKNPKDKKHIWFGETINGGTQFEYNGEGVTTKDMATQLAFMRLLANHASQNITYHCKNSIAYMDEETGNLKKAVILQGSNDVELRAEGNSRFTFSVLVDGCSKKNNKWGKTIIEYRTNKPSRLPILDIAPLDIGGADQEFGLHIGPVCFK.

Residues 1–22 (MLSFVDTRILLLLAVTSYLATS) form the signal peptide. Position 23 is a pyrrolidone carboxylic acid (glutamine 23). A propeptide spans 23–77 (QHLFQASAGRKGPRGDKGPQGERGPPGPPGRDGEDGPPGPPGPPGPPGLGGNFAA) (N-terminal propeptide). Residues 28–1110 (ASAGRKGPRG…GPNGGGYEVG (1083 aa)) are disordered. Pro residues predominate over residues 59-69 (PPGPPGPPGPP). Glutamine 78 carries the pyrrolidone carboxylic acid modification. Lysine 83 carries the post-translational modification Allysine. Residues 88 to 97 (GPGPMGLMGP) are compositionally biased toward low complexity. The span at 98–110 (RGPPGASGPPGPP) shows a compositional bias: pro residues. Residues 112–128 (FQGVPGEPGEPGQTGPQ) are compositionally biased toward low complexity. Residues 140–154 (AGEDGHPGKPGRPGE) are compositionally biased toward basic and acidic residues. Residue lysine 176 is modified to 5-hydroxylysine; alternate. Residue lysine 176 is glycosylated (O-linked (Gal...) hydroxylysine; alternate). Composition is skewed to low complexity over residues 224 to 263 (IGAPGPAGARGSDGSAGPTGPAGPIGAAGPPGFPGAPGAK) and 299 to 320 (PGANGLPGAKGAAGLPGVAGAP). Pro residues predominate over residues 322 to 335 (LPGPRGIPGPPGPA). Residues proline 440 and proline 443 each carry the 4-hydroxyproline modification. Composition is skewed to low complexity over residues 601–610 (PAGPIGSRGP) and 674–683 (RGLPGAIGAP). Positions 684–699 (GPAGGAGDRGEGGPAG) are enriched in gly residues. Over residues 721–736 (PSGFAGPPGAAGQPGA) the composition is skewed to low complexity. The span at 737 to 746 (KGERGPKGPK) shows a compositional bias: basic and acidic residues. Composition is skewed to low complexity over residues 748–794 (ETGP…AGRV), 842–875 (AGEKGPSGEAGAAGPPGTPGPQGILGAPGILGLP), 898–931 (VSGPPGARGPSGPVGSPGPNGAPGEAGRDGNPGN), 955–965 (PSGALGAPGPH), and 986–995 (VGPAGAFGPR). Residues 1004-1015 (RGEKGEPGDKGH) show a composition bias toward basic and acidic residues. Residues 1036 to 1049 (QHGDQGPPGNNGPA) show a composition bias toward low complexity. Composition is skewed to pro residues over residues 1051-1060 (PRGPPGPSGP) and 1088-1102 (AGPPGPPGPPGPPGP). Residues 1118–1363 (ADQPSLRPKD…GLHIGPVCFK (246 aa)) constitute a propeptide, C-terminal propeptide. The 236-residue stretch at 1128–1363 (YEVDATLKTL…GLHIGPVCFK (236 aa)) folds into the Fibrillar collagen NC1 domain. 3 cysteine pairs are disulfide-bonded: cysteine 1158–cysteine 1190, cysteine 1198–cysteine 1361, and cysteine 1269–cysteine 1314. Ca(2+) is bound by residues aspartate 1176, asparagine 1178, glutamine 1179, cysteine 1181, and aspartate 1184. The N-linked (GlcNAc...) asparagine glycan is linked to asparagine 1264.

Belongs to the fibrillar collagen family. In terms of assembly, trimers of one alpha 2(I) and two alpha 1(I) chains. In terms of processing, prolines at the third position of the tripeptide repeating unit (G-X-Y) are hydroxylated in some or all of the chains. The N-terminus of the mature protein is blocked. Forms the fibrils of tendon, ligaments and bones. In bones the fibrils are mineralized with calcium hydroxyapatite.

It localises to the secreted. The protein resides in the extracellular space. Its subcellular location is the extracellular matrix. Type I collagen is a member of group I collagen (fibrillar forming collagen). The polypeptide is Collagen alpha-2(I) chain (COL1A2) (Gallus gallus (Chicken)).